Consider the following 278-residue polypeptide: Ribosomal RNA small subunit methyltransferase A (278 aa).

N25, L27, G52, E73, D97, and N117 together coordinate S-adenosyl-L-methionine.

The protein belongs to the class I-like SAM-binding methyltransferase superfamily. rRNA adenine N(6)-methyltransferase family. RsmA subfamily.

The protein resides in the cytoplasm. It catalyses the reaction adenosine(1518)/adenosine(1519) in 16S rRNA + 4 S-adenosyl-L-methionine = N(6)-dimethyladenosine(1518)/N(6)-dimethyladenosine(1519) in 16S rRNA + 4 S-adenosyl-L-homocysteine + 4 H(+). Its function is as follows. Specifically dimethylates two adjacent adenosines (A1518 and A1519) in the loop of a conserved hairpin near the 3'-end of 16S rRNA in the 30S particle. May play a critical role in biogenesis of 30S subunits. The polypeptide is Ribosomal RNA small subunit methyltransferase A (Desulfitobacterium hafniense (strain DSM 10664 / DCB-2)).